Reading from the N-terminus, the 446-residue chain is 3',5'-cyclic-AMP phosphodiesterase 7B (446 aa).

A PDEase domain is found at 97–420 (LDEDYLGQAR…AQWKSLLSNQ (324 aa)). Histidine 173 serves as the catalytic Proton donor. 4 residues coordinate a divalent metal cation: histidine 177, histidine 213, aspartate 214, and aspartate 323. The tract at residues 422–446 (RRRGSGQDLAGPAPETLEQTEGATP) is disordered. Position 426 is a phosphoserine (serine 426). Position 445 is a phosphothreonine (threonine 445).

This sequence belongs to the cyclic nucleotide phosphodiesterase family. PDE7 subfamily. A divalent metal cation serves as cofactor. Highly expressed in brain.

The catalysed reaction is 3',5'-cyclic AMP + H2O = AMP + H(+). It participates in purine metabolism; 3',5'-cyclic AMP degradation; AMP from 3',5'-cyclic AMP: step 1/1. With respect to regulation, inhibited by dipyridamole, IBMX and SCH 51866. Insensitive to zaprinast, rolipram, and milrinone. Hydrolyzes the second messenger cAMP, which is a key regulator of many important physiological processes. May be involved in the control of cAMP-mediated neural activity and cAMP metabolism in the brain. The chain is 3',5'-cyclic-AMP phosphodiesterase 7B from Mus musculus (Mouse).